The chain runs to 134 residues: Small ribosomal subunit protein uS9 (134 aa).

A disordered region spans residues R113–R134. The span at Y120–R134 shows a compositional bias: basic residues.

This sequence belongs to the universal ribosomal protein uS9 family.

This Thermotoga petrophila (strain ATCC BAA-488 / DSM 13995 / JCM 10881 / RKU-1) protein is Small ribosomal subunit protein uS9.